The primary structure comprises 580 residues: Negative elongation factor B (580 aa).

An N6-acetyllysine modification is found at Lys-519. Residues 552–580 are disordered; it reads DHRKPSPTQAAETPALDLPLPSVPAPATL. A Phosphoserine modification is found at Ser-557.

It belongs to the NELF-B family. In terms of assembly, the NELF complex is composed of NELFA, NELFB, NELFCD and NELFE; the N-terminus of NELFB binds to the NELFA:NELFCD subcomplex. Binds RNA which may help to stabilize the NELF complex on nucleic acid Interacts with the first BRCT repeat of BRCA1. Interacts with KIAA1191. Isoform 1 and isoform 2 interact with NELFA, NELFCD and NELFE. In terms of tissue distribution, isoform 1 is expressed in the kidney, liver, adipose and lung. Isoform 2 is widely expressed.

It is found in the nucleus. Its function is as follows. Essential component of the NELF complex, a complex that negatively regulates the elongation of transcription by RNA polymerase II (Pol II). The NELF complex, which acts via an association with the DSIF complex and causes transcriptional pausing, is counteracted by the P-TEFb kinase complex. May be able to induce chromatin unfolding. Essential for early embryogenesis; plays an important role in maintaining the undifferentiated state of embryonic stem cells (ESCs) by preventing unscheduled expression of developmental genes. Plays a key role in establishing the responsiveness of stem cells to developmental cues; facilitates plasticity and cell fate commitment in ESCs by establishing the appropriate expression level of signaling molecules. Supports the transcription of genes involved in energy metabolism in cardiomyocytes; facilitates the association of transcription initiation factors with the promoters of the metabolism-related genes. The polypeptide is Negative elongation factor B (Nelfb) (Mus musculus (Mouse)).